The following is a 346-amino-acid chain: Golgi-associated RAB2 interactor protein 2 (346 aa).

The tract at residues 275-346 (TPVESEANTS…EKHVRQPKDF (72 aa)) is disordered. Composition is skewed to basic and acidic residues over residues 283 to 297 (TSKE…EKTP) and 334 to 346 (KLVE…PKDF).

The protein belongs to the GARIN family. Interacts with CALM1.

The protein resides in the cell projection. The protein localises to the cilium. It localises to the flagellum. In terms of biological role, seems to play a role in sperm motility. The protein is Golgi-associated RAB2 interactor protein 2 (GARIN2) of Macaca fascicularis (Crab-eating macaque).